A 292-amino-acid chain; its full sequence is MAAITASMVAELRAKTDAPMMECKKALTEADGDLNKAEELLRVKLGNKASKAASRVTAEGVVASFIDGTTGVLVELNCETDFVSKNDDFLAFSAKVAELIAKQNPADVAALSALELDGVSVEATRTALIGKIGENLTIRRFVRYANGGKLVSYLHGTRIGVMVEFDGDEAAAKDVAMHVAAMKPVSLSAEQVPADLIAKERSIAEQKAAESGKPAEIAAKMVEGSVQKYLKEVSLFNQPFVKNDKQTVEQMLKAANTTVKGFTLYVVGEGIEKKQDDFAAEVAAQVAAAQKG.

An involved in Mg(2+) ion dislocation from EF-Tu region spans residues 80-83 (TDFV).

Belongs to the EF-Ts family.

It is found in the cytoplasm. In terms of biological role, associates with the EF-Tu.GDP complex and induces the exchange of GDP to GTP. It remains bound to the aminoacyl-tRNA.EF-Tu.GTP complex up to the GTP hydrolysis stage on the ribosome. The polypeptide is Elongation factor Ts (Cupriavidus pinatubonensis (strain JMP 134 / LMG 1197) (Cupriavidus necator (strain JMP 134))).